Consider the following 132-residue polypeptide: Holo-[acyl-carrier-protein] synthase (132 aa).

Residues Asp-8 and Glu-64 each coordinate Mg(2+).

This sequence belongs to the P-Pant transferase superfamily. AcpS family. Mg(2+) serves as cofactor.

Its subcellular location is the cytoplasm. It carries out the reaction apo-[ACP] + CoA = holo-[ACP] + adenosine 3',5'-bisphosphate + H(+). Transfers the 4'-phosphopantetheine moiety from coenzyme A to a Ser of acyl-carrier-protein. This is Holo-[acyl-carrier-protein] synthase from Shewanella sediminis (strain HAW-EB3).